The following is a 427-amino-acid chain: Glutamate-1-semialdehyde 2,1-aminomutase (427 aa).

K265 is modified (N6-(pyridoxal phosphate)lysine).

This sequence belongs to the class-III pyridoxal-phosphate-dependent aminotransferase family. HemL subfamily. Homodimer. It depends on pyridoxal 5'-phosphate as a cofactor.

It is found in the cytoplasm. It catalyses the reaction (S)-4-amino-5-oxopentanoate = 5-aminolevulinate. It functions in the pathway porphyrin-containing compound metabolism; protoporphyrin-IX biosynthesis; 5-aminolevulinate from L-glutamyl-tRNA(Glu): step 2/2. The protein is Glutamate-1-semialdehyde 2,1-aminomutase of Idiomarina loihiensis (strain ATCC BAA-735 / DSM 15497 / L2-TR).